A 261-amino-acid polypeptide reads, in one-letter code: 4-hydroxy-tetrahydrodipicolinate reductase (261 aa).

An NAD(+)-binding site is contributed by 8–13 (GYKGRM). Arginine 36 contributes to the NADP(+) binding site. Residues 95 to 97 (GTT) and 121 to 124 (APNF) contribute to the NAD(+) site. Catalysis depends on histidine 151, which acts as the Proton donor/acceptor. Histidine 152 is a binding site for (S)-2,3,4,5-tetrahydrodipicolinate. The Proton donor role is filled by lysine 155. Residue 161 to 162 (GT) participates in (S)-2,3,4,5-tetrahydrodipicolinate binding.

The protein belongs to the DapB family.

Its subcellular location is the cytoplasm. It carries out the reaction (S)-2,3,4,5-tetrahydrodipicolinate + NAD(+) + H2O = (2S,4S)-4-hydroxy-2,3,4,5-tetrahydrodipicolinate + NADH + H(+). The catalysed reaction is (S)-2,3,4,5-tetrahydrodipicolinate + NADP(+) + H2O = (2S,4S)-4-hydroxy-2,3,4,5-tetrahydrodipicolinate + NADPH + H(+). It participates in amino-acid biosynthesis; L-lysine biosynthesis via DAP pathway; (S)-tetrahydrodipicolinate from L-aspartate: step 4/4. In terms of biological role, catalyzes the conversion of 4-hydroxy-tetrahydrodipicolinate (HTPA) to tetrahydrodipicolinate. In Lactiplantibacillus plantarum (strain ATCC BAA-793 / NCIMB 8826 / WCFS1) (Lactobacillus plantarum), this protein is 4-hydroxy-tetrahydrodipicolinate reductase.